Reading from the N-terminus, the 239-residue chain is Ribosomal RNA small subunit methyltransferase G (239 aa).

S-adenosyl-L-methionine contacts are provided by residues G105, L110, 156 to 157 (VE), and R169.

The protein belongs to the methyltransferase superfamily. RNA methyltransferase RsmG family.

It is found in the cytoplasm. The enzyme catalyses guanosine(527) in 16S rRNA + S-adenosyl-L-methionine = N(7)-methylguanosine(527) in 16S rRNA + S-adenosyl-L-homocysteine. Functionally, specifically methylates the N7 position of guanine in position 527 of 16S rRNA. The sequence is that of Ribosomal RNA small subunit methyltransferase G from Verminephrobacter eiseniae (strain EF01-2).